The following is a 493-amino-acid chain: UDP-N-acetylmuramoyl-L-alanyl-D-glutamate--L-lysine ligase (493 aa).

Ser30 contributes to the UDP-N-acetyl-alpha-D-muramoyl-L-alanyl-D-glutamate binding site. Residue Gly110–Ser116 coordinates ATP. Residues Asn151, Thr152 to Thr153, Ser179, and Arg187 contribute to the UDP-N-acetyl-alpha-D-muramoyl-L-alanyl-D-glutamate site. At Lys219 the chain carries N6-carboxylysine. The L-lysine recognition motif motif lies at Asp406–Ala409.

This sequence belongs to the MurCDEF family. MurE subfamily. It depends on Mg(2+) as a cofactor. Post-translationally, carboxylation is probably crucial for Mg(2+) binding and, consequently, for the gamma-phosphate positioning of ATP.

The protein localises to the cytoplasm. It catalyses the reaction UDP-N-acetyl-alpha-D-muramoyl-L-alanyl-D-glutamate + L-lysine + ATP = UDP-N-acetyl-alpha-D-muramoyl-L-alanyl-gamma-D-glutamyl-L-lysine + ADP + phosphate + H(+). The protein operates within cell wall biogenesis; peptidoglycan biosynthesis. Its function is as follows. Catalyzes the addition of L-lysine to the nucleotide precursor UDP-N-acetylmuramoyl-L-alanyl-D-glutamate (UMAG) in the biosynthesis of bacterial cell-wall peptidoglycan. Cannot use diaminopimelate as substrate. Can accept L-ornithine as substrate, but the efficiency is 400-fold lower than that with L-lysine. Seems to have a role in beta-lactam antibiotic resistance. The sequence is that of UDP-N-acetylmuramoyl-L-alanyl-D-glutamate--L-lysine ligase from Staphylococcus aureus (strain NCTC 8325 / PS 47).